The primary structure comprises 298 residues: Proline iminopeptidase (298 aa).

The AB hydrolase-1 domain maps to 26-277 (VLLLHGGPAM…NGSHLAMWDD (252 aa)). Ser-103 acts as the Nucleophile in catalysis. The active site involves Asp-244. Catalysis depends on His-271, which acts as the Proton donor.

Belongs to the peptidase S33 family. As to quaternary structure, monomer.

It carries out the reaction Release of N-terminal proline from a peptide.. Its function is as follows. Releases the N-terminal proline from various substrates. Cleaves specifically Pro-betaNA and small peptides containing proline at the amino terminal. No activity against hydroxyproline-betaNA. The polypeptide is Proline iminopeptidase (fpaP) (Elizabethkingia meningoseptica (Chryseobacterium meningosepticum)).